Consider the following 263-residue polypeptide: MKKITISDLNNWKEVGEKFASITAYDASFAKIFEEQSMPVIIVGDSLGSVIQGKPTTLDVSIEELVYHTKCVRAGSPNAFIISDLPFMSYHTPEAACGSAAKLMKAGANMVKIEGGSWLINTVKMLTERAVPVCAHLGLMPQAVNIYGGYKLQGKTEEQATKMLENAKELQRAGAQALILECIPAKLARQITLELHIPVIGIGAGNDTDGQVLVMHDILGISANYIPRFSRNFLAETGSIEAAVKKYIDEVKQQTFPGEKHCF.

Residues aspartate 45 and aspartate 84 each coordinate Mg(2+). Residues 45–46 (DS), aspartate 84, and lysine 112 each bind 3-methyl-2-oxobutanoate. Glutamate 114 is a binding site for Mg(2+). Glutamate 181 functions as the Proton acceptor in the catalytic mechanism.

This sequence belongs to the PanB family. Homodecamer; pentamer of dimers. The cofactor is Mg(2+).

The protein resides in the cytoplasm. The enzyme catalyses 3-methyl-2-oxobutanoate + (6R)-5,10-methylene-5,6,7,8-tetrahydrofolate + H2O = 2-dehydropantoate + (6S)-5,6,7,8-tetrahydrofolate. It functions in the pathway cofactor biosynthesis; (R)-pantothenate biosynthesis; (R)-pantoate from 3-methyl-2-oxobutanoate: step 1/2. In terms of biological role, catalyzes the reversible reaction in which hydroxymethyl group from 5,10-methylenetetrahydrofolate is transferred onto alpha-ketoisovalerate to form ketopantoate. This chain is 3-methyl-2-oxobutanoate hydroxymethyltransferase 2, found in Aliivibrio fischeri (strain ATCC 700601 / ES114) (Vibrio fischeri).